The following is a 451-amino-acid chain: Histidinol dehydrogenase (451 aa).

The interval 1–20 is disordered; sequence MLNVTDLRGHTPSKSDIRRA. Residues 7–19 are compositionally biased toward basic and acidic residues; it reads LRGHTPSKSDIRR. 3 residues coordinate NAD(+): Tyr129, Gln193, and Asn218. Residues Thr241, Gln263, and His266 each coordinate substrate. Zn(2+) contacts are provided by Gln263 and His266. Residues Glu332 and His333 each act as proton acceptor in the active site. 4 residues coordinate substrate: His333, Asp366, Glu420, and His425. Asp366 is a binding site for Zn(2+). Residue His425 coordinates Zn(2+).

The protein belongs to the histidinol dehydrogenase family. It depends on Zn(2+) as a cofactor.

It carries out the reaction L-histidinol + 2 NAD(+) + H2O = L-histidine + 2 NADH + 3 H(+). It functions in the pathway amino-acid biosynthesis; L-histidine biosynthesis; L-histidine from 5-phospho-alpha-D-ribose 1-diphosphate: step 9/9. Its function is as follows. Catalyzes the sequential NAD-dependent oxidations of L-histidinol to L-histidinaldehyde and then to L-histidine. The protein is Histidinol dehydrogenase of Corynebacterium efficiens (strain DSM 44549 / YS-314 / AJ 12310 / JCM 11189 / NBRC 100395).